We begin with the raw amino-acid sequence, 206 residues long: Ribosomal RNA large subunit methyltransferase E (206 aa).

Residues glycine 60, tryptophan 62, aspartate 80, aspartate 96, and aspartate 121 each coordinate S-adenosyl-L-methionine. The active-site Proton acceptor is lysine 161.

This sequence belongs to the class I-like SAM-binding methyltransferase superfamily. RNA methyltransferase RlmE family.

The protein localises to the cytoplasm. The enzyme catalyses uridine(2552) in 23S rRNA + S-adenosyl-L-methionine = 2'-O-methyluridine(2552) in 23S rRNA + S-adenosyl-L-homocysteine + H(+). In terms of biological role, specifically methylates the uridine in position 2552 of 23S rRNA at the 2'-O position of the ribose in the fully assembled 50S ribosomal subunit. The chain is Ribosomal RNA large subunit methyltransferase E from Nitrosospira multiformis (strain ATCC 25196 / NCIMB 11849 / C 71).